The sequence spans 92 residues: Small ribosomal subunit protein uS19 (92 aa).

The protein belongs to the universal ribosomal protein uS19 family.

In terms of biological role, protein S19 forms a complex with S13 that binds strongly to the 16S ribosomal RNA. The polypeptide is Small ribosomal subunit protein uS19 (Cereibacter sphaeroides (strain ATCC 17029 / ATH 2.4.9) (Rhodobacter sphaeroides)).